Reading from the N-terminus, the 431-residue chain is Zeaxanthin glucosyltransferase (431 aa).

This sequence belongs to the UDP-glycosyltransferase family.

It carries out the reaction all-trans-zeaxanthin + 2 UDP-alpha-D-glucose = zeaxanthin bis(beta-D-glucoside) + 2 UDP + 2 H(+). It functions in the pathway carotenoid biosynthesis; zeaxanthin diglucoside biosynthesis. Catalyzes the glycosylation reaction which converts zeaxanthin to zeaxanthin bis(beta-D-glucoside). The reaction proceeds in two steps with the monoglucoside as an intermediate. The sequence is that of Zeaxanthin glucosyltransferase (crtX) from Pantoea ananas (Erwinia uredovora).